The following is a 643-amino-acid chain: Very long-chain fatty acid transport protein (643 aa).

The Cytoplasmic segment spans residues 1–15 (MACMHQAQLYNDLEE). The chain crosses the membrane as a helical span at residues 16–36 (LLTGPSVPIVAGAAGAAALTA). At 37–138 (YINAKYHIAH…AIDGGNSAEH (102 aa)) the chain is on the extracellular side. A helical membrane pass occupies residues 139-159 (LMLWLALDAIGAATSFLNWNL). Residues 160 to 249 (TGAGLIHCIK…TGLPKGVFIS (90 aa)) are Cytoplasmic-facing. Residue 235–246 (YTSGTTGLPKGV) participates in ATP binding. The stretch at 250-318 (TGRELRTDWS…FWPEVVASEA (69 aa)) is an intramembrane region. The Cytoplasmic segment spans residues 319-643 (NIIQYVGELG…QGIVDKRIRL (325 aa)). The FACS motif lies at 477 to 525 (DLWFKSGDMLRQDAEGRVYFVDRLGDTFRWKSENVSTNEVADVMGTFPQ).

This sequence belongs to the ATP-dependent AMP-binding enzyme family.

The protein resides in the lipid droplet. It is found in the cell membrane. Its subcellular location is the peroxisome membrane. It localises to the peroxisome. It carries out the reaction a very long-chain fatty acid + ATP + CoA = a very long-chain fatty acyl-CoA + AMP + diphosphate. Acyl-CoA synthetase required for both the import of long chain fatty acids (LCFAs) (C14-C18) and the activation very long chain fatty acids (VLCFAs) (C20-C26) by esterification of the fatty acids into metabolically active CoA-thioesters for subsequent degradation or incorporation into phospholipids. The transport and fatty acyl-CoA synthetase activities are genetically separable and are thus independent activities. Esterifies VLCFAs in the peroxisome matrix. The VLCFAs are actively transported into peroxisomes by a PXA1-PXA2 heterodimeric transporter in the peroxisomal membrane. In Cochliobolus heterostrophus (Southern corn leaf blight fungus), this protein is Very long-chain fatty acid transport protein (FAT1).